A 164-amino-acid polypeptide reads, in one-letter code: R-phycoerythrin alpha chain (164 aa).

(2R,3E)-phycoerythrobilin contacts are provided by asparagine 47, lysine 81, cysteine 82, arginine 84, histidine 88, arginine 137, cysteine 139, and arginine 142.

Belongs to the phycobiliprotein family. As to quaternary structure, heterododecamer of 6 alpha and 6 beta chains. The basic functional unit of phycobiliproteins is a ring-shaped hexamer formed from two back-to-back trimers contacting via the alpha chain subunits. The trimers are composed of alpha/beta subunit heterodimers arranged around a three-fold axis of symmetry. The phycoerythrins also contain a gamma subunit which is located in the center of the hexamer. Contains two covalently linked phycoerythrobilin chromophores. In PubMed:8876649 the authors refer to the bilins as phycoerythrobilins. In the PDB entries, the bilins are named as phycocyanobilins although the modeled compounds correspond to phycoerythrobilins.

Its subcellular location is the plastid. It localises to the chloroplast thylakoid membrane. In terms of biological role, light-harvesting photosynthetic tetrapyrrole chromophore-protein from the phycobiliprotein complex. The protein is R-phycoerythrin alpha chain (cpeA) of Polysiphonia urceolata (Red alga).